The chain runs to 529 residues: Delayed-rectifier potassium channel regulatory subunit KCNS1 (529 aa).

At M1–L217 the chain is on the cytoplasmic side. A helical membrane pass occupies residues P218–I239. The Extracellular portion of the chain corresponds to H240–P270. A helical transmembrane segment spans residues V271–L293. The Cytoplasmic portion of the chain corresponds to A294–P304. Residues L305 to A322 traverse the membrane as a helical segment. The Extracellular portion of the chain corresponds to G323–L340. Residues G341 to H361 form a helical; Voltage-sensor membrane-spanning segment. The Cytoplasmic portion of the chain corresponds to S362–Y376. A helical membrane pass occupies residues R377–Y398. Residues T399–I411 are Extracellular-facing. Positions P412–T423 form an intramembrane region, helical. The Selectivity filter signature appears at T424–D429. Residues T424–V431 lie within the membrane without spanning it. Over P432–K438 the chain is Extracellular. Residues L439 to Y467 form a helical membrane-spanning segment. The Cytoplasmic portion of the chain corresponds to R468 to Y529. Positions L500 to Y529 are disordered. A compositionally biased stretch (basic and acidic residues) spans T502 to D514.

This sequence belongs to the potassium channel family. S (TC 1.A.1.2) subfamily. Kv9.1/KCNS1 sub-subfamily. In terms of assembly, heterotetramer with KCNB1. Heterotetramer with KCNB2. Does not form homomultimers.

The protein resides in the cell membrane. Its function is as follows. Potassium channel regulatory subunit that modulate the delayed rectifier voltage-gated potassium channel activity of KCNB1 and KCNB2 by altering their kinetics, expression levels, and shifting the half-inactivation potential to more polarized values. While it does not form functional channels on its own, it can form functional heterotetrameric channels with KCNB1 and KCNB2. Each regulatory subunit has unique regulatory properties that can lead to extensive inhibition, significant changes in kinetics, and/or substantial shifts in the voltage dependencies of the inactivation process. The polypeptide is Delayed-rectifier potassium channel regulatory subunit KCNS1 (Colobus guereza (Mantled guereza)).